Consider the following 403-residue polypeptide: Aromatic-L-amino-acid decarboxylase (403 aa).

Thr-8 is a substrate binding site. Pyridoxal 5'-phosphate is bound by residues Ala-74 and Ser-75. His-118 contributes to the substrate binding site. His-118 is an active-site residue. Asp-197 and Asn-226 together coordinate pyridoxal 5'-phosphate. Lys-229 bears the N6-(pyridoxal phosphate)lysine mark. Residues 250-276 are disordered; sequence NAFNVDPLYLKHDMQGSAPDYRHWQIP.

The protein belongs to the group II decarboxylase family. Homodimer. Pyridoxal 5'-phosphate serves as cofactor.

It catalyses the reaction L-dopa + H(+) = dopamine + CO2. The enzyme catalyses 5-hydroxy-L-tryptophan + H(+) = serotonin + CO2. Catalyzes the decarboxylation of L-3,4-dihydroxyphenylalanine (L-DOPA) to dopamine and L-5-hydroxytryptophan (5-HTP) to serotonin. Catalyzes the formation of serotonin more efficiently than dopamine. Displays no activity to tyrosine. Variation in the synthesis of bioamines may be a factor contributing to natural variation in life span. The polypeptide is Aromatic-L-amino-acid decarboxylase (Ddc) (Drosophila lebanonensis (Fruit fly)).